The sequence spans 201 residues: Envelope glycoprotein (201 aa).

The Extracellular portion of the chain corresponds to 1–148; it reads RRARYKKEPV…FNKSPWFTTL (148 aa). The segment at 10–30 is fusion peptide; the sequence is VSLTLALLLGGLTMGGIAAGV. Residues 39–75 are a coiled coil; it reads ATQQFQQLQAAIHDDLKEVEKSITNLEKSLTSLSEVV. The segment at 76-92 is immunosuppression; that stretch reads LQNRRGLDLLFLKEGGL. A CX6CC motif is present at residues 93-101; that stretch reads CAALKEECC. The chain crosses the membrane as a helical span at residues 149 to 169; sequence ISTVMGPLIILLLILLFGPCI. Cys-168 is lipidated: S-palmitoyl cysteine; by host. At 170–201 the chain is on the cytoplasmic side; that stretch reads LNRLVQFIKDRISVVQALVLTQQYHQLKTIGD. A YXXL motif; contains endocytosis signal motif is present at residues 193 to 196; the sequence is YHQL.

In terms of assembly, the mature envelope protein (Env) consists of a trimer of SU-TM heterodimers attached by a labile interchain disulfide bond. Specific enzymatic cleavages in vivo yield mature proteins. Envelope glycoproteins are synthesized as an inactive precursor that is N-glycosylated and processed likely by host cell furin or by a furin-like protease in the Golgi to yield the mature SU and TM proteins. The cleavage site between SU and TM requires the minimal sequence [KR]-X-[KR]-R. The R-peptide is released from the C-terminus of the cytoplasmic tail of the TM protein upon particle formation as a result of proteolytic cleavage by the viral protease. Cleavage of this peptide is required for TM to become fusogenic. In terms of processing, the transmembrane protein is palmitoylated. Post-translationally, the R-peptide is palmitoylated.

It is found in the virion membrane. Its subcellular location is the host cell membrane. Its function is as follows. The surface protein (SU) attaches the virus to the host cell by binding to its receptor. This interaction triggers the refolding of the transmembrane protein (TM) and is thought to activate its fusogenic potential by unmasking its fusion peptide. Fusion occurs at the host cell plasma membrane. In terms of biological role, the transmembrane protein (TM) acts as a class I viral fusion protein. Under the current model, the protein has at least 3 conformational states: pre-fusion native state, pre-hairpin intermediate state, and post-fusion hairpin state. During viral and target cell membrane fusion, the coiled coil regions (heptad repeats) assume a trimer-of-hairpins structure, positioning the fusion peptide in close proximity to the C-terminal region of the ectodomain. The formation of this structure appears to drive apposition and subsequent fusion of viral and target cell membranes. Membranes fusion leads to delivery of the nucleocapsid into the cytoplasm. This is Envelope glycoprotein (env) from Mus musculus (Mouse).